The chain runs to 243 residues: Dirigent protein 16 (243 aa).

Residues 1 to 24 (MMIKQSPFLLLTTILFTVAVFVAA) form the signal peptide.

Belongs to the plant dirigent protein family. As to quaternary structure, homodimer.

The protein localises to the secreted. It is found in the extracellular space. Its subcellular location is the apoplast. Functionally, dirigent proteins impart stereoselectivity on the phenoxy radical-coupling reaction, yielding optically active lignans from two molecules of coniferyl alcohol in the biosynthesis of lignans, flavonolignans, and alkaloids and thus plays a central role in plant secondary metabolism. The chain is Dirigent protein 16 (DIR16) from Arabidopsis thaliana (Mouse-ear cress).